A 72-amino-acid polypeptide reads, in one-letter code: Translation initiation factor IF-1 (72 aa).

The S1-like domain maps to 1 to 72; the sequence is MSKEEVLEFS…TKGRITYRYK (72 aa).

It belongs to the IF-1 family. Component of the 30S ribosomal translation pre-initiation complex which assembles on the 30S ribosome in the order IF-2 and IF-3, IF-1 and N-formylmethionyl-tRNA(fMet); mRNA recruitment can occur at any time during PIC assembly.

Its subcellular location is the cytoplasm. Its function is as follows. One of the essential components for the initiation of protein synthesis. Stabilizes the binding of IF-2 and IF-3 on the 30S subunit to which N-formylmethionyl-tRNA(fMet) subsequently binds. Helps modulate mRNA selection, yielding the 30S pre-initiation complex (PIC). Upon addition of the 50S ribosomal subunit IF-1, IF-2 and IF-3 are released leaving the mature 70S translation initiation complex. The protein is Translation initiation factor IF-1 of Bartonella tribocorum (strain CIP 105476 / IBS 506).